Here is a 164-residue protein sequence, read N- to C-terminus: HTH-type transcriptional regulator IscR (164 aa).

One can recognise an HTH rrf2-type domain in the interval 2 to 131 (RLTSKGRYAV…NNITLAELVN (130 aa)). Residues 28–51 (LADISERQGISLSYLEQLFSRLRK) constitute a DNA-binding region (H-T-H motif). Residues C92, C98, and C104 each contribute to the [2Fe-2S] cluster site. A metal cation is bound by residues C92, C98, and C104. The tract at residues 145 to 164 (DTRRTANGRPQETINVNLRA) is disordered. A compositionally biased stretch (polar residues) spans 152–164 (GRPQETINVNLRA).

Requires [2Fe-2S] cluster as cofactor.

Regulates the transcription of several operons and genes involved in the biogenesis of Fe-S clusters and Fe-S-containing proteins. In Serratia proteamaculans (strain 568), this protein is HTH-type transcriptional regulator IscR.